A 257-amino-acid polypeptide reads, in one-letter code: tRNA-cytidine(32) 2-sulfurtransferase (257 aa).

The PP-loop motif motif lies at 37 to 42; that stretch reads SGGKDS. The [4Fe-4S] cluster site is built by Cys112, Cys115, and Cys202.

Belongs to the TtcA family. In terms of assembly, homodimer. Mg(2+) serves as cofactor. [4Fe-4S] cluster is required as a cofactor.

It is found in the cytoplasm. The enzyme catalyses cytidine(32) in tRNA + S-sulfanyl-L-cysteinyl-[cysteine desulfurase] + AH2 + ATP = 2-thiocytidine(32) in tRNA + L-cysteinyl-[cysteine desulfurase] + A + AMP + diphosphate + H(+). Its pathway is tRNA modification. Catalyzes the ATP-dependent 2-thiolation of cytidine in position 32 of tRNA, to form 2-thiocytidine (s(2)C32). The sulfur atoms are provided by the cysteine/cysteine desulfurase (IscS) system. The sequence is that of tRNA-cytidine(32) 2-sulfurtransferase from Geobacter metallireducens (strain ATCC 53774 / DSM 7210 / GS-15).